Consider the following 273-residue polypeptide: Formamidopyrimidine-DNA glycosylase (273 aa).

The Schiff-base intermediate with DNA role is filled by Pro2. Residue Glu3 is the Proton donor of the active site. The Proton donor; for beta-elimination activity role is filled by Lys60. DNA is bound by residues His94, Arg113, and Arg154. The segment at 239-273 (NAYDREGQPCPRCGATIIKTVVAQRGTHYCPECQR) adopts an FPG-type zinc-finger fold. Residue Arg263 is the Proton donor; for delta-elimination activity of the active site.

It belongs to the FPG family. Monomer. Requires Zn(2+) as cofactor.

The enzyme catalyses Hydrolysis of DNA containing ring-opened 7-methylguanine residues, releasing 2,6-diamino-4-hydroxy-5-(N-methyl)formamidopyrimidine.. It catalyses the reaction 2'-deoxyribonucleotide-(2'-deoxyribose 5'-phosphate)-2'-deoxyribonucleotide-DNA = a 3'-end 2'-deoxyribonucleotide-(2,3-dehydro-2,3-deoxyribose 5'-phosphate)-DNA + a 5'-end 5'-phospho-2'-deoxyribonucleoside-DNA + H(+). In terms of biological role, involved in base excision repair of DNA damaged by oxidation or by mutagenic agents. Acts as a DNA glycosylase that recognizes and removes damaged bases. Has a preference for oxidized purines, such as 7,8-dihydro-8-oxoguanine (8-oxoG). Has AP (apurinic/apyrimidinic) lyase activity and introduces nicks in the DNA strand. Cleaves the DNA backbone by beta-delta elimination to generate a single-strand break at the site of the removed base with both 3'- and 5'-phosphates. This is Formamidopyrimidine-DNA glycosylase from Roseiflexus sp. (strain RS-1).